Here is a 2222-residue protein sequence, read N- to C-terminus: Voltage-dependent R-type calcium channel subunit alpha-1E (2222 aa).

At 1 to 40 (MALYNPIPVRQNCFTVNRSLFIFGEDNIVRKYAKKLIDWP) the chain is on the cytoplasmic side. The stretch at 27–305 (NIVRKYAKKL…LVLGVLSGEF (279 aa)) is one I repeat. The chain crosses the membrane as a helical span at residues 41 to 59 (PFEYMILATIIANCIVLAL). Residues 60 to 78 (EQHLPEDDKTPMSRRLEKT) are Extracellular-facing. A helical transmembrane segment spans residues 79 to 97 (EPYFIGIFCFEAGIKIVAL). Residues 98-109 (GFIFHKGSYLRN) lie on the Cytoplasmic side of the membrane. A helical transmembrane segment spans residues 110–124 (GWNVMDFIVVLSGIL). The Extracellular segment spans residues 125–136 (ATAGTHFNTHVD). A helical transmembrane segment spans residues 137–156 (LRTLRAVRVLRPLKLVSGIP). Over 157–174 (SLQIVLKSIMKAMVPLLQ) the chain is Cytoplasmic. Residues 175-195 (IGLLLFFAILMFAIIGLEFYS) traverse the membrane as a helical segment. The Extracellular portion of the chain corresponds to 196–277 (GKLHRACFMN…NTNDALGATW (82 aa)). A glycan (N-linked (GlcNAc...) asparagine) is linked at Asn205. The helical transmembrane segment at 278–301 (NWLYFIPLIIIGSFFVLNLVLGVL) threads the bilayer. Over 302–427 (SGEFAKERER…ISIRHMVKSQ (126 aa)) the chain is Cytoplasmic. Residues 325–342 (QQIERELNGYRAWIDKAE) form a binding to the beta subunit region. Asp377 provides a ligand contact to Ca(2+). A Phosphoserine modification is found at Ser378. The Ca(2+) site is built by Ser379, Glu381, and Cys383. At Thr391 the chain carries Phosphothreonine. One copy of the II repeat lies at 413–657 (ERLLRISIRH…VFLAIAVDNL (245 aa)). A helical transmembrane segment spans residues 428-447 (VFYWIVLSVVALNTACVAIV). Topologically, residues 448 to 460 (HHNQPQWLTHLLY) are extracellular. The helical transmembrane segment at 461-480 (YAEFLFLGLFLLEMSLKMYG) threads the bilayer. At 481 to 489 (MGPRLYFHS) the chain is on the cytoplasmic side. The chain crosses the membrane as a helical span at residues 490-508 (SFNCFDFGVTVGSIFEVVW). Topologically, residues 509–518 (AIFRPGTSFG) are extracellular. Residues 519–537 (ISVLRALRLLRIFKITKYW) form a helical membrane-spanning segment. At 538–556 (ASLRNLVVSLMSSMKSIIS) the chain is on the cytoplasmic side. The chain crosses the membrane as a helical span at residues 557–576 (LLFLLFLFIVVFALLGMQLF). Residues 577–629 (GGRFNFNDGTPSANFDTFPAAIMTVFQILTGEDWNEVMYNGIRSQGGVSSGMW) are Extracellular-facing. The chain crosses the membrane as a helical span at residues 630-654 (SAIYFIVLTLFGNYTLLNVFLAIAV). The Cytoplasmic portion of the chain corresponds to 655–1100 (DNLANAQELT…TNPIRKACHY (446 aa)). A disordered region spans residues 680-727 (LQKAKEVSPMSAPNMPSIERDRRRRHHMSMWEPRSSHLRERRRRHHMS). Phosphoserine is present on residues Ser687, Ser696, Ser744, Ser766, and Ser806. Disordered stretches follow at residues 820–944 (NQRS…VPRG) and 1042–1076 (NKTD…RETG). The segment covering 864–877 (RHRQSQRRSRHRRV) has biased composition (basic residues). Residues 884 to 896 (SASASRSRSASQE) are compositionally biased toward low complexity. Position 898 is a phosphoserine (Ser898). Basic and acidic residues-rich tracts occupy residues 906–935 (DGEK…DLRR) and 1044–1055 (TDGEASPLKEAE). Ser1049 is modified (phosphoserine). The III repeat unit spans residues 1092–1378 (NPIRKACHYI…IFVALIIITF (287 aa)). A helical transmembrane segment spans residues 1101 to 1117 (IVNLRYFEMCILLVIAA). Residues 1118–1141 (SSIALAAEDPVLTNSERNKVLRYF) lie on the Extracellular side of the membrane. A helical transmembrane segment spans residues 1142–1161 (DYVFTGVFTFEMVIKMIDQG). Over 1162–1169 (LILQDGSY) the chain is Cytoplasmic. A helical transmembrane segment spans residues 1170–1192 (FRDLWNILDFVVVVGALVAFALA). Residues 1193-1206 (NALGTNKGRDIKTI) lie on the Extracellular side of the membrane. A helical transmembrane segment spans residues 1207–1224 (KSLRVLRVLRPLKTIKRL). Residues 1225 to 1243 (PKLKAVFDCVVTSLKNVFN) are Cytoplasmic-facing. A helical membrane pass occupies residues 1244–1263 (ILIVYKLFMFIFAVIAVQLF). The Extracellular portion of the chain corresponds to 1264–1350 (KGKFFYCTDS…RGPSRSNRME (87 aa)). A helical transmembrane segment spans residues 1351 to 1374 (MSIFYVVYFVVFPFFFVNIFVALI). Residues 1375 to 1431 (IITFQEQGDKMMEECSLEKNERACIDFAISAKPLTRYMPQNRHTFQYRVWHFVVSPS) are Cytoplasmic-facing. Residues 1415 to 1678 (NRHTFQYRVW…LFVAVIMDNF (264 aa)) form an IV repeat. Residues 1432–1450 (FEYTIMAMIALNTVVLMMK) form a helical membrane-spanning segment. Topologically, residues 1451–1467 (YYSAPWTYELALKYLNI) are extracellular. Residues 1468 to 1485 (AFTMVFSLECVLKVIAFG) form a helical membrane-spanning segment. Residues 1486–1493 (FLNYFRDT) are Cytoplasmic-facing. Residues 1494–1512 (WNIFDFITVIGSITEIILT) traverse the membrane as a helical segment. Topologically, residues 1513-1523 (DSKLVNTSGFN) are extracellular. 2 N-linked (GlcNAc...) asparagine glycosylation sites follow: Asn1518 and Asn1523. A helical membrane pass occupies residues 1524–1542 (MSFLKLFRAARLIKLLRQG). Topologically, residues 1543-1561 (YTIRILLWTFVQSFKALPY) are cytoplasmic. A helical transmembrane segment spans residues 1562–1581 (VCLLIAMLFFIYAIIGMQVF). At 1582-1650 (GNIKLDEESH…NESERCGTDL (69 aa)) the chain is on the extracellular side. N-linked (GlcNAc...) asparagine glycosylation is present at Asn1641. The chain crosses the membrane as a helical span at residues 1651 to 1676 (AYVYFVSFIFFCSFLMLNLFVAVIMD). The Cytoplasmic segment spans residues 1677–2222 (NFEYLTRDSS…LSDTEEDDKC (546 aa)). Positions 1691-1726 (HHLDEFVRVWAEYDRAACGRIHYTEMYEMLTLMSPP) constitute an EF-hand domain. Residues Asp1704, Arg1710, and Glu1715 each coordinate Ca(2+). Residues 1970–2135 (SAHRLNSDSG…QQGQHPSPQH (166 aa)) are disordered. Residues 1974 to 1994 (LNSDSGHKSDTHRSGGRERGR) are compositionally biased toward basic and acidic residues. Phosphoserine is present on residues Ser2003 and Ser2022. Basic and acidic residues predominate over residues 2010 to 2027 (NSEERGTQADWESPERRQ). Residues 2046–2061 (SLSESSIPSISDTSTP) are compositionally biased toward low complexity. The span at 2104-2123 (LASQALESNSACLTESSNSL) shows a compositional bias: polar residues. Positions 2124–2135 (HPQQGQHPSPQH) are enriched in low complexity.

This sequence belongs to the calcium channel alpha-1 subunit (TC 1.A.1.11) family. CACNA1E subfamily. As to quaternary structure, interacts with EFHC1. Voltage-dependent calcium channels are multisubunit complexes, consisting of alpha-1, alpha-2, beta and delta subunits in a 1:1:1:1 ratio. The channel activity is directed by the pore-forming and voltage-sensitive alpha-1 subunit. In many cases, this subunit is sufficient to generate voltage-sensitive calcium channel activity. The auxiliary subunits beta and alpha-2/delta linked by a disulfide bridge regulate the channel activity. In terms of tissue distribution, expressed in central nervous system and in insulinoma.

It is found in the membrane. The enzyme catalyses Ca(2+)(in) = Ca(2+)(out). In terms of biological role, voltage-sensitive calcium channels (VSCC) mediate the entry of calcium ions into excitable cells and are also involved in a variety of calcium-dependent processes, including muscle contraction, hormone or neurotransmitter release, gene expression, cell motility, cell division and cell death. The isoform alpha-1E gives rise to R-type calcium currents. R-type calcium channels belong to the 'high-voltage activated' (HVA) group and are blocked by nickel. They are however insensitive to dihydropyridines (DHP). Calcium channels containing alpha-1E subunit could be involved in the modulation of firing patterns of neurons which is important for information processing. The protein is Voltage-dependent R-type calcium channel subunit alpha-1E (Cacna1e) of Rattus norvegicus (Rat).